The sequence spans 438 residues: Xylose isomerase (438 aa).

Residues His100 and Asp103 contribute to the active site. Residues Glu231, Glu267, His270, Asp295, Asp306, Asp308, and Asp338 each contribute to the Mg(2+) site.

Belongs to the xylose isomerase family. In terms of assembly, homotetramer. The cofactor is Mg(2+).

Its subcellular location is the cytoplasm. It catalyses the reaction alpha-D-xylose = alpha-D-xylulofuranose. This chain is Xylose isomerase, found in Pseudomonas syringae pv. tomato (strain ATCC BAA-871 / DC3000).